Reading from the N-terminus, the 489-residue chain is Rhamnulokinase (489 aa).

13 to 17 (ASSGR) contacts ATP. Cysteines 68 and 222 form a disulfide. Residues glycine 83 and 236 to 238 (HDT) contribute to the substrate site. The Proton acceptor role is filled by aspartate 237. Threonine 259 lines the ATP pocket. Residue asparagine 296 participates in substrate binding. An ATP-binding site is contributed by glutamine 304. The cysteines at positions 353 and 370 are disulfide-linked. Glycine 402 contacts ATP. An intrachain disulfide couples cysteine 413 to cysteine 417.

This sequence belongs to the rhamnulokinase family. It depends on Mg(2+) as a cofactor.

The catalysed reaction is L-rhamnulose + ATP = L-rhamnulose 1-phosphate + ADP + H(+). It participates in carbohydrate degradation; L-rhamnose degradation; glycerone phosphate from L-rhamnose: step 2/3. Functionally, involved in the catabolism of L-rhamnose (6-deoxy-L-mannose). Catalyzes the transfer of the gamma-phosphate group from ATP to the 1-hydroxyl group of L-rhamnulose to yield L-rhamnulose 1-phosphate. This is Rhamnulokinase from Enterobacter sp. (strain 638).